Consider the following 133-residue polypeptide: UPF0102 protein Plav_3586 (133 aa).

Belongs to the UPF0102 family.

The sequence is that of UPF0102 protein Plav_3586 from Parvibaculum lavamentivorans (strain DS-1 / DSM 13023 / NCIMB 13966).